Reading from the N-terminus, the 359-residue chain is Aminoacyl tRNA synthase complex-interacting multifunctional protein 1 (359 aa).

The tract at residues alanine 52–lysine 92 is required for fibroblast proliferation. An interaction with HSP90B1 region spans residues lysine 100–valine 241. A required for endothelial cell death region spans residues serine 149–glycine 163. Residues serine 156 to proline 196 are disordered. Over residues isoleucine 157–leucine 185 the composition is skewed to basic and acidic residues. Residues glycine 163 to glycine 239 form a required for endothelial cell migration region. Residue lysine 184 forms a Glycyl lysine isopeptide (Lys-Gly) (interchain with G-Cter in SUMO1) linkage. Position 187 is a phosphoserine (serine 187). In terms of domain architecture, tRNA-binding spans aspartate 198–threonine 299. Lysine 316 is subject to N6-succinyllysine.

Homodimer. Part of the multisynthetase complex (MSC), a multisubunit complex that groups tRNA ligases for Arg (RARS1), Asp (DARS1), Gln (QARS1), Ile (IARS1), Leu (LARS1), Lys (KARS1), Met (MARS1) the bifunctional ligase for Glu and Pro (EPRS1) and the auxiliary subunits AIMP1/p43, AIMP2/p38 and EEF1E1/p18. Interacts (via N-terminus) with RARS1 (via N-terminus). Part of a complex composed of RARS1, QARS1 and AIMP1. Interacts (via C-terminus) with SMURF2. Interacts (via N-terminus) with HSP90B1/gp96 (via C-terminus). Interacts with PSMA7. Interacts with TARS3. Cleaved by caspase-7 in response to apoptosis to produce EMAP-II.

The protein localises to the nucleus. It localises to the cytoplasm. It is found in the cytosol. Its subcellular location is the secreted. The protein resides in the endoplasmic reticulum. The protein localises to the golgi apparatus. Non-catalytic component of the multisynthase complex. Stimulates the catalytic activity of cytoplasmic arginyl-tRNA synthase. Binds tRNA. Possesses inflammatory cytokine activity. Negatively regulates TGF-beta signaling through stabilization of SMURF2 by binding to SMURF2 and inhibiting its SMAD7-mediated degradation. Involved in glucose homeostasis through induction of glucagon secretion at low glucose levels. Promotes dermal fibroblast proliferation and wound repair. Regulates KDELR1-mediated retention of HSP90B1/gp96 in the endoplasmic reticulum. Plays a role in angiogenesis by inducing endothelial cell migration at low concentrations and endothelian cell apoptosis at high concentrations. Induces maturation of dendritic cells and monocyte cell adhesion. This chain is Aminoacyl tRNA synthase complex-interacting multifunctional protein 1 (AIMP1), found in Cricetulus griseus (Chinese hamster).